The primary structure comprises 283 residues: Mau operon transcriptional activator (283 aa).

Positions 1-58 constitute an HTH lysR-type domain; sequence MNWDDLRVVAAINRCGSFNRAAKMLNVEETTIARRLARLEGSLGCVLFQAVDGQRRPT. A DNA-binding region (H-T-H motif) is located at residues 18 to 37; sequence FNRAAKMLNVEETTIARRLA.

It belongs to the LysR transcriptional regulatory family.

Its function is as follows. Transcriptional activator of the mau genes involved in methylamine metabolism. This Paracoccus denitrificans protein is Mau operon transcriptional activator (mauR).